A 491-amino-acid polypeptide reads, in one-letter code: Keratin, type I cytoskeletal 24 (491 aa).

The disordered stretch occupies residues 1–23 (MFCSAQKGSCSSRVSSSGAVGSR). The segment at 1-117 (MFCSAQKGSC…GYDGGLLSGS (117 aa)) is head. The span at 8–23 (GSCSSRVSSSGAVGSR) shows a compositional bias: low complexity. Residues 118-153 (EKQTMQGLNDRLANYLDKVRALEEANTDLETKIKDW) are coil 1A. The region spanning 118-432 (EKQTMQGLND…RLLNGDGGGC (315 aa)) is the IF rod domain. Residues 154–174 (YGRHGSGKDGPGRDYSQYCSV) form a linker 1 region. Residues 175–266 (IEDLKNQIIS…KNHEEEMKCL (92 aa)) form a coil 1B region. The interval 267-289 (QGSSGGDVTVEMNATPGTDLTKL) is linker 12. Positions 290-428 (LNDMRAQYEA…ETYRRLLNGD (139 aa)) are coil 2. Residues 429-491 (GGGCDYRNLV…VSNISEVKIK (63 aa)) form a tail region.

This sequence belongs to the intermediate filament family. Heterotetramer of two type I and two type II keratins.

This is Keratin, type I cytoskeletal 24 (Krt24) from Rattus norvegicus (Rat).